The chain runs to 146 residues: Large ribosomal subunit protein bL9 (146 aa).

It belongs to the bacterial ribosomal protein bL9 family.

Functionally, binds to the 23S rRNA. The polypeptide is Large ribosomal subunit protein bL9 (Flavobacterium johnsoniae (strain ATCC 17061 / DSM 2064 / JCM 8514 / BCRC 14874 / CCUG 350202 / NBRC 14942 / NCIMB 11054 / UW101) (Cytophaga johnsonae)).